A 307-amino-acid polypeptide reads, in one-letter code: Methionyl-tRNA formyltransferase (307 aa).

108-111 is a (6S)-5,6,7,8-tetrahydrofolate binding site; the sequence is SLLP.

The protein belongs to the Fmt family.

It catalyses the reaction L-methionyl-tRNA(fMet) + (6R)-10-formyltetrahydrofolate = N-formyl-L-methionyl-tRNA(fMet) + (6S)-5,6,7,8-tetrahydrofolate + H(+). Its function is as follows. Attaches a formyl group to the free amino group of methionyl-tRNA(fMet). The formyl group appears to play a dual role in the initiator identity of N-formylmethionyl-tRNA by promoting its recognition by IF2 and preventing the misappropriation of this tRNA by the elongation apparatus. This chain is Methionyl-tRNA formyltransferase, found in Xanthomonas campestris pv. campestris (strain 8004).